The primary structure comprises 170 residues: N-glycosidase R617 (170 aa).

This sequence belongs to the YbiA family.

It carries out the reaction 2,5-diamino-6-hydroxy-4-(5-phosphoribosylamino)-pyrimidine + H2O = 2,5,6-triamino-4-hydroxypyrimidine + D-ribose 5-phosphate. The enzyme catalyses 5-amino-6-(5-phospho-D-ribosylamino)uracil + H2O = 5,6-diaminouracil + D-ribose 5-phosphate. Catalyzes the hydrolysis of the N-glycosidic bond in the first two intermediates of riboflavin biosynthesis, which are highly reactive metabolites, yielding relatively innocuous products. Thus, can divert a surplus of harmful intermediates into relatively harmless products and pre-empt the damage these intermediates would otherwise do. May act on other substrates in vivo. This chain is N-glycosidase R617, found in Acanthamoeba polyphaga mimivirus (APMV).